The primary structure comprises 90 residues: Co-chaperonin GroES (90 aa).

It belongs to the GroES chaperonin family. As to quaternary structure, heptamer of 7 subunits arranged in a ring. Interacts with the chaperonin GroEL.

The protein localises to the cytoplasm. Functionally, together with the chaperonin GroEL, plays an essential role in assisting protein folding. The GroEL-GroES system forms a nano-cage that allows encapsulation of the non-native substrate proteins and provides a physical environment optimized to promote and accelerate protein folding. GroES binds to the apical surface of the GroEL ring, thereby capping the opening of the GroEL channel. This chain is Co-chaperonin GroES, found in Borreliella burgdorferi (strain ATCC 35210 / DSM 4680 / CIP 102532 / B31) (Borrelia burgdorferi).